The primary structure comprises 347 residues: Toluene-4-sulfonate monooxygenase system iron-sulfur subunit TsaM1 (347 aa).

In terms of domain architecture, Rieske spans 7–109 (WYVAAWDTEI…VVERNRLVWI (103 aa)). [2Fe-2S] cluster is bound by residues C48, H50, C67, and H70.

As to quaternary structure, homotetramer. Part of the p-toluenesulfonate methyl-monooxygenase complex TsaBM, comprising the reductase TsaB and the oxygenase TsaM. It depends on [2Fe-2S] cluster as a cofactor.

It catalyses the reaction toluene-4-sulfonate + NADH + O2 + H(+) = 4-(hydroxymethyl)benzenesulfonate + NAD(+) + H2O. Functionally, involved in the toluene-4-sulfonate degradation pathway. Does not discriminate between the sulfonate and the carboxyl substituents and can also be involved in the p-toluenecarboxylate degradation pathway. Can use toluene-4-sulfonate, p-toluate, m-toluate and 4-ethylbenzoate as substrates, but not p-xylene, toluene and p-cresol. Also catalyzes the demethylation of 4-methoxybenzoate to 4-hydroxybenzoate. The sequence is that of Toluene-4-sulfonate monooxygenase system iron-sulfur subunit TsaM1 (tsaM1) from Comamonas testosteroni (Pseudomonas testosteroni).